The primary structure comprises 238 residues: Ribosome-recycling factor, mitochondrial (238 aa).

This sequence belongs to the RRF family.

The protein resides in the mitochondrion. In terms of biological role, responsible for the release of ribosomes from messenger RNA at the termination of protein biosynthesis. May increase the efficiency of translation by recycling ribosomes from one round of translation to another. In Caenorhabditis elegans, this protein is Ribosome-recycling factor, mitochondrial.